We begin with the raw amino-acid sequence, 59 residues long: Large ribosomal subunit protein uL30 (59 aa).

Belongs to the universal ribosomal protein uL30 family. In terms of assembly, part of the 50S ribosomal subunit.

This Geobacter metallireducens (strain ATCC 53774 / DSM 7210 / GS-15) protein is Large ribosomal subunit protein uL30.